A 476-amino-acid chain; its full sequence is MKVSLPAFEKAKVLVVGDVMLDRYWVGPTGRISPEAPVPVVKINQVEDRPGGAANVALNIATLGGQVQLAGLVGEDDTAKALTLGVQALGVEPQWLNIADKPTITKLRVLSRNQQLIRLDFEESFDKQDSARLLKQSEALLDSVDVVVLSDYAKGAIDKPQDFIALARAKGVKVLVDPKGSDFSRYHGASLITPNMSEFEAVVGAVTSEADLLEKARGLLNKHQFDAILVTRSEKGMTLVTANAPELHIPTVAREVYDVTGAGDTVISALATSLAAGAELPQACAIANTAAGVVVGKLGTSTVSRIELIEALALHHGESGFGVVSEDQLAYALEQAKLRGERVVMTNGCFDILHAGHVSYLKQAKALGDRLIVAVNDDASVKRLKGEGRPVNQVDRRMAVLAGLAAVDWVVPFSEDTPQRIIARLLPDLLVKGGDYKVEDIAGGAEVIAAGGQVQVLGFEDGISTTAIIQNIMAKQ.

Residues 1 to 319 (MKVSLPAFEK…EALALHHGES (319 aa)) form a ribokinase region. 195-198 (NMSE) contributes to the ATP binding site. Residue D264 is part of the active site. The interval 345–476 (MTNGCFDILH…AIIQNIMAKQ (132 aa)) is cytidylyltransferase.

In the N-terminal section; belongs to the carbohydrate kinase PfkB family. This sequence in the C-terminal section; belongs to the cytidylyltransferase family. Homodimer.

It catalyses the reaction D-glycero-beta-D-manno-heptose 7-phosphate + ATP = D-glycero-beta-D-manno-heptose 1,7-bisphosphate + ADP + H(+). It carries out the reaction D-glycero-beta-D-manno-heptose 1-phosphate + ATP + H(+) = ADP-D-glycero-beta-D-manno-heptose + diphosphate. Its pathway is nucleotide-sugar biosynthesis; ADP-L-glycero-beta-D-manno-heptose biosynthesis; ADP-L-glycero-beta-D-manno-heptose from D-glycero-beta-D-manno-heptose 7-phosphate: step 1/4. The protein operates within nucleotide-sugar biosynthesis; ADP-L-glycero-beta-D-manno-heptose biosynthesis; ADP-L-glycero-beta-D-manno-heptose from D-glycero-beta-D-manno-heptose 7-phosphate: step 3/4. Functionally, catalyzes the phosphorylation of D-glycero-D-manno-heptose 7-phosphate at the C-1 position to selectively form D-glycero-beta-D-manno-heptose-1,7-bisphosphate. Its function is as follows. Catalyzes the ADP transfer from ATP to D-glycero-beta-D-manno-heptose 1-phosphate, yielding ADP-D-glycero-beta-D-manno-heptose. The chain is Bifunctional protein HldE from Shewanella sp. (strain ANA-3).